We begin with the raw amino-acid sequence, 1091 residues long: Protein diaphanous (1091 aa).

Positions methionine 1–histidine 37 are disordered. Residues methionine 1 to glutamate 56 form a basic region region. Residues serine 25–threonine 34 are compositionally biased toward low complexity. A GBD/FH3 domain is found at isoleucine 59–aspartate 431. Residues lysine 455–asparagine 496 adopt a coiled-coil conformation. Disordered regions lie at residues alanine 499–glycine 589, arginine 994–alanine 1021, and glycine 1039–valine 1072. Pro residues predominate over residues proline 512–proline 572. The 85-residue stretch at proline 512–proline 596 folds into the FH1 domain. Residues proline 601 to glutamine 1001 form the FH2 domain. Positions arginine 994–glutamine 1010 are enriched in basic and acidic residues. The region spanning proline 1022–proline 1054 is the DAD domain.

It belongs to the formin homology family. Diaphanous subfamily. As to quaternary structure, may interact (via CBD/FH3 domain) with Rho1.

It localises to the cytoplasm. The protein resides in the cytoskeleton. The protein localises to the cleavage furrow. It is found in the apical cell membrane. Its function is as follows. Required for cytokinesis in both mitosis and meiosis. Has a role in actin cytoskeleton organization and is essential for many, if not all, actin-mediated events involving membrane invagination. May serve as a mediator between signaling molecules and actin organizers at specific phases of the cell cycle. Possible component of the contractile ring or may control its function. The sequence is that of Protein diaphanous (dia) from Drosophila melanogaster (Fruit fly).